Consider the following 86-residue polypeptide: Large ribosomal subunit protein eL20 (86 aa).

The protein belongs to the eukaryotic ribosomal protein eL20 family. In terms of assembly, part of the 50S ribosomal subunit. Binds 23S rRNA.

This is Large ribosomal subunit protein eL20 from Saccharolobus solfataricus (strain ATCC 35092 / DSM 1617 / JCM 11322 / P2) (Sulfolobus solfataricus).